Consider the following 217-residue polypeptide: Ribonuclease HII (217 aa).

An RNase H type-2 domain is found at 26 to 215; sequence EIVCGVDEAG…VREALDLMAG (190 aa). A divalent metal cation contacts are provided by Asp-32, Glu-33, and Asp-124.

It belongs to the RNase HII family. Requires Mn(2+) as cofactor. The cofactor is Mg(2+).

The protein resides in the cytoplasm. It carries out the reaction Endonucleolytic cleavage to 5'-phosphomonoester.. Its function is as follows. Endonuclease that specifically degrades the RNA of RNA-DNA hybrids. This Burkholderia ambifaria (strain ATCC BAA-244 / DSM 16087 / CCUG 44356 / LMG 19182 / AMMD) (Burkholderia cepacia (strain AMMD)) protein is Ribonuclease HII.